Here is a 464-residue protein sequence, read N- to C-terminus: Asparagine--tRNA ligase (464 aa).

Belongs to the class-II aminoacyl-tRNA synthetase family. As to quaternary structure, homodimer.

Its subcellular location is the cytoplasm. It catalyses the reaction tRNA(Asn) + L-asparagine + ATP = L-asparaginyl-tRNA(Asn) + AMP + diphosphate + H(+). The protein is Asparagine--tRNA ligase of Xanthomonas euvesicatoria pv. vesicatoria (strain 85-10) (Xanthomonas campestris pv. vesicatoria).